Consider the following 349-residue polypeptide: uncharacterized protein (349 aa).

Residues 1 to 29 form the signal peptide; the sequence is MKQKYENYFKKRLILNLLIFLLLACSSES.

This is an uncharacterized protein from Borreliella burgdorferi (strain ATCC 35210 / DSM 4680 / CIP 102532 / B31) (Borrelia burgdorferi).